A 1008-amino-acid polypeptide reads, in one-letter code: PAN2-PAN3 deadenylation complex catalytic subunit PAN2 (1008 aa).

5 WD repeats span residues G29–R68, P110–V149, H158–V198, V200–P236, and A277–E316. The tract at residues F314–K449 is linker. In terms of domain architecture, USP spans K450–G755. The 169-residue stretch at A808–Y976 folds into the Exonuclease domain. 4 residues coordinate a divalent metal cation: D810, E812, D915, and D968.

This sequence belongs to the peptidase C19 family. PAN2 subfamily. Forms a heterotrimer with an asymmetric homodimer of the regulatory subunit PAN3 to form the poly(A)-nuclease (PAN) deadenylation complex. The cofactor is a divalent metal cation.

It localises to the cytoplasm. The catalysed reaction is Exonucleolytic cleavage of poly(A) to 5'-AMP.. With respect to regulation, positively regulated by the regulatory subunit PAN3. Catalytic subunit of the poly(A)-nuclease (PAN) deadenylation complex, one of two cytoplasmic mRNA deadenylases involved in mRNA turnover. PAN specifically shortens poly(A) tails of RNA and the activity is stimulated by poly(A)-binding protein PAB1. PAN deadenylation is followed by rapid degradation of the shortened mRNA tails by the CCR4-NOT complex. Deadenylated mRNAs are then degraded by two alternative mechanisms, namely exosome-mediated 3'-5' exonucleolytic degradation, or deadenylation-dependent mRNA decaping and subsequent 5'-3' exonucleolytic degradation by XRN1. May also be involved in post-transcriptional maturation of mRNA poly(A) tails. This is PAN2-PAN3 deadenylation complex catalytic subunit PAN2 from Yarrowia lipolytica (strain CLIB 122 / E 150) (Yeast).